Here is a 157-residue protein sequence, read N- to C-terminus: ATP synthase subunit b 1 (157 aa).

The helical transmembrane segment at 7–29 (LFGQMVTFALLVWFTMKYVWPPL) threads the bilayer.

Belongs to the ATPase B chain family. As to quaternary structure, F-type ATPases have 2 components, F(1) - the catalytic core - and F(0) - the membrane proton channel. F(1) has five subunits: alpha(3), beta(3), gamma(1), delta(1), epsilon(1). F(0) has three main subunits: a(1), b(2) and c(10-14). The alpha and beta chains form an alternating ring which encloses part of the gamma chain. F(1) is attached to F(0) by a central stalk formed by the gamma and epsilon chains, while a peripheral stalk is formed by the delta and b chains.

The protein localises to the cell inner membrane. F(1)F(0) ATP synthase produces ATP from ADP in the presence of a proton or sodium gradient. F-type ATPases consist of two structural domains, F(1) containing the extramembraneous catalytic core and F(0) containing the membrane proton channel, linked together by a central stalk and a peripheral stalk. During catalysis, ATP synthesis in the catalytic domain of F(1) is coupled via a rotary mechanism of the central stalk subunits to proton translocation. Its function is as follows. Component of the F(0) channel, it forms part of the peripheral stalk, linking F(1) to F(0). This is ATP synthase subunit b 1 from Methylococcus capsulatus (strain ATCC 33009 / NCIMB 11132 / Bath).